A 219-amino-acid polypeptide reads, in one-letter code: Transmembrane emp24 domain-containing protein 10 (219 aa).

Positions 1-31 are cleaved as a signal peptide; sequence MSGLSGPPARRGPFPLALLLLFLLGPRLVLA. The interval 1 to 142 is required for interaction with STX17; sequence MSGLSGPPAR…KNYEEIAKVE (142 aa). At 32–185 the chain is on the lumenal side; the sequence is ISFHLPINSR…RDTNESTNTR (154 aa). One can recognise a GOLD domain in the interval 41–193; the sequence is RKCLREEIHK…TRVLYFSIFS (153 aa). Residues 147-178 are required for TMED10 and TMED2 cis-Golgi network localization; it reads LEVELRRLEDLSESIVNDFAYMKKREEEMRDT. Residues Arg171 and Arg176 each carry the dimethylated arginine modification. An N-linked (GlcNAc...) asparagine glycan is attached at Asn179. A helical transmembrane segment spans residues 186-206; that stretch reads VLYFSIFSMFCLIGLATWQVF. The interaction with COPG1 stretch occupies residues 204–219; that stretch reads QVFYLRRFFKAKKLIE. Over 207–219 the chain is Cytoplasmic; it reads YLRRFFKAKKLIE. The tract at residues 207-219 is interaction with ARF1 and IL1B; sequence YLRRFFKAKKLIE. A COPII vesicle coat-binding motif is present at residues 211–212; the sequence is FF. The COPI vesicle coat-binding motif lies at 211 to 219; sequence FFKAKKLIE.

Belongs to the EMP24/GP25L family. Predominantly dimeric and to a lesser extent monomeric in the ER. Monomer and dimer in ERGIC and cis-Golgi network. Forms homooligomer (via GOLD domain); the assembly is promoted by direct binding with leaderless cargos and may form a protein channel that facilitates cargo entry into the ERGIC. Forms heterooligomeric complexes with other members of the p24 family such as TMED2, TMED7 and TMED9. Interacts (via GOLD domain) with TMED2 (via GOLD domain); the complex is required for export of TMED10 from the ER to the cis-Golgi network; the complex is proposed to be involved in cis-Golgi network dynamics and / or biogenesis. Associates with the COPI vesicle coat subunits (coatomer). Tetramerization of the cytoplasmic domain at the Golgi membrane in vitro; the complex is proposed to interact with COPI coatomer and induce budding of the vesicles. Interacts with COPG1; the interaction involves TMED10 homodimer. Interacts with ARF1 (GDP-bound); the interaction probably involves a TMED10 oligomer. Interacts with SEC23A, SEC24B, SEC24C and SEC24D components of the coat protein complex II/COPII, indicative of an association of TMED10 with the COPII vesicle coat. Interacts with CD59. Interacts with MPPE1/PGAP5; the complex might recruit and sort GPI-anchored proteins to the ER-exit site, or the interaction might lead to recycling of PGAP5 between the ER and the Golgi. Interacts with F2LR1/PAR2. Interacts with KDELR2/ERD2; the interaction is disrupted by KDELR2 ligand. Found in a complex composed at least of SURF4, TMED2 and TMED10. Associates with the presenilin-dependent gamma-secretase complex. Interacts with STX17; the interaction is direct. Interacts with IL-1; the interaction is direct. Interacts with RAB21 (active GTP-bound form); the interaction is indirect and regulates TMED10 abundance and localization at the Golgi.

It is found in the endoplasmic reticulum membrane. It localises to the endoplasmic reticulum-Golgi intermediate compartment membrane. Its subcellular location is the golgi apparatus membrane. The protein resides in the golgi apparatus. The protein localises to the cis-Golgi network membrane. It is found in the trans-Golgi network membrane. It localises to the cytoplasmic vesicle. Its subcellular location is the secretory vesicle membrane. The protein resides in the cell membrane. The protein localises to the melanosome. Its function is as follows. Cargo receptor involved in protein vesicular trafficking and quality control in the endoplasmic reticulum (ER) and Golgi. The p24 protein family is a group of transmembrane proteins that bind coat protein complex I/COPI and coat protein complex II/COPII involved in vesicular trafficking between the membranes. Acts at the lumenal side for incorporation of secretory cargo molecules into transport vesicles and involved in vesicle coat formation at the cytoplasmic side. Mainly functions in the early secretory pathway and cycles between the ER, ER-Golgi intermediate compartment (ERGIC) and Golgi, mediating cargo transport through COPI and COPII-coated vesicles. In COPII vesicle-mediated anterograde transport, involved in the transport of GPI-anchored proteins by acting together with TMED2 as their cargo receptor; the function specifically implies SEC24C and SEC24D of the COPII vesicle coat and lipid raft-like microdomains of the ER. Recognizes GPI anchors structural remodeled in the ER by the GPI inositol-deacylase/PGAP1 and the metallophosphoesterase MPPE1/PGAP5. In COPI vesicle-mediated retrograde transport, involved in the biogenesis of COPI vesicles and vesicle coat recruitment. Involved in trafficking of amyloid beta A4 protein and soluble APP-beta release (independent from the modulation of gamma-secretase activity). Involved in the KDELR2-mediated retrograde transport of the toxin A subunit (CTX-A-K63)together with COPI and the COOH terminus of KDELR2. On Golgi membranes, acts as a primary receptor for ARF1-GDP, a GTP-binding protein involved in COPI-vesicle formation. Increases coatomer-dependent GTPase-activating activity of ARFGAP2 which mediates the hydrolysis of ARF1-bound GTP and therefore modulates protein trafficking from the Golgi apparatus. Involved in the exocytic trafficking of G protein-coupled receptors F2LR1/PAR2 (trypsin and tryspin-like enzyme receptor), OPRM1 (opioid receptor) and P2RY4 (UTD and UDP receptor) from the Golgi to the plasma membrane, thus contributing to receptor resensitization. In addition to its cargo receptor activity, may also act as a protein channel after oligomerization, facilitating the post-translational entry of leaderless cytoplasmic cargo into the ERGIC. Involved in the translocation into ERGIC, the vesicle entry and the secretion of leaderless cargos (lacking the secretion signal sequence), including the mature form of interleukin 1/IL-1 family members, the alpha-crystallin B chain HSPB5, the carbohydrate-binding proteins galectin-1/LGALS1 and galectin-3/LGALS3, the microtubule-associated protein Tau/MAPT, and the annexin A1/ANXA1; the translocation process is dependent on cargo protein unfolding and enhanced by chaperones HSP90AB1 and HSP90B1/GRP9. Could also associates with the presenilin-dependent gamma-secretase complex in order to regulate gamma-cleavages of the amyloid beta A4 protein to yield amyloid-beta 40/Abeta40. In Homo sapiens (Human), this protein is Transmembrane emp24 domain-containing protein 10.